A 182-amino-acid polypeptide reads, in one-letter code: NADH-quinone oxidoreductase subunit I (182 aa).

2 consecutive 4Fe-4S ferredoxin-type domains span residues 52 to 82 and 92 to 121; these read LTRD…LQKA and DFFR…LTPD. [4Fe-4S] cluster contacts are provided by C62, C65, C68, C72, C101, C104, C107, and C111.

It belongs to the complex I 23 kDa subunit family. NDH-1 is composed of 13 different subunits. Subunits NuoA, H, J, K, L, M, N constitute the membrane sector of the complex. The cofactor is [4Fe-4S] cluster.

The protein resides in the cell inner membrane. The catalysed reaction is a quinone + NADH + 5 H(+)(in) = a quinol + NAD(+) + 4 H(+)(out). Functionally, NDH-1 shuttles electrons from NADH, via FMN and iron-sulfur (Fe-S) centers, to quinones in the respiratory chain. The immediate electron acceptor for the enzyme in this species is believed to be ubiquinone. Couples the redox reaction to proton translocation (for every two electrons transferred, four hydrogen ions are translocated across the cytoplasmic membrane), and thus conserves the redox energy in a proton gradient. Required for plants roots colonization. The polypeptide is NADH-quinone oxidoreductase subunit I (nuoI) (Pseudomonas fluorescens).